A 145-amino-acid chain; its full sequence is MFIGTYNHSIDSKNRMLIPSKVKATLNEVTFVYLSLGFDENIDMRLESEFNQFVDNINNLPIGSREARNLTRLLLSQTYKVEIDSASRILIPQNLIDKAKIKKDIYIIGTNDRYEIWAKEVYDDFSLNQEDTLSDLAEKLLINGI.

2 SpoVT-AbrB domains span residues 5–49 (TYNH…LESE) and 78–121 (TYKV…AKEV).

It belongs to the MraZ family. In terms of assembly, forms oligomers.

The protein localises to the cytoplasm. It localises to the nucleoid. The protein is Transcriptional regulator MraZ of Ureaplasma urealyticum serovar 10 (strain ATCC 33699 / Western).